The sequence spans 459 residues: WPP domain-interacting protein 3 (459 aa).

Residues 1–17 are compositionally biased toward polar residues; the sequence is MNESVPDSVEDNGNSVP. The tract at residues 1 to 78 is disordered; it reads MNESVPDSVE…GPVRDEAAPV (78 aa). A compositionally biased stretch (basic residues) spans 52 to 66; sequence STRKGFGLKKWRRIK. Short sequence motifs (nuclear localization signal) lie at residues 60–61 and 63–64; these read KK and RR. Residues 67–78 show a composition bias toward basic and acidic residues; sequence RDGPVRDEAAPV. A Nuclear localization signal 3 motif is present at residues 86-87; that stretch reads KR. Disordered stretches follow at residues 240 to 266 and 308 to 330; these read KEEVQTYSRSENGNKEDDGESKKNNNH and TDELSSDQPSHQNCKEDNSTSSG. Over residues 251–266 the composition is skewed to basic and acidic residues; that stretch reads NGNKEDDGESKKNNNH. Polar residues predominate over residues 308–319; it reads TDELSSDQPSHQ. The stretch at 331–375 forms a coiled coil; the sequence is SKALILKEKVKLLEHKLEEARAALEAKEARIQELENSKIESELEC. Residues 426–459 form the KASH domain; the sequence is KLGFYILTQLILLVSILRFLVLQFSPASRLVIPT. The chain crosses the membrane as a helical span at residues 427–447; sequence LGFYILTQLILLVSILRFLVL.

In terms of assembly, component of Ran complexes at least composed of WIT1 or WIT2, RANGAP1 or RANGAP2, and WIP1 or WIP2 or WIP3. Interacts with RANGAP1, WPP1/MAF1, and WPP2/MAF2. Interacts with SUN1 and SUN2. Core component of the LINC complex which is composed of inner nuclear membrane SUN domain-containing proteins coupled to outer nuclear membrane WIP and WIT proteins. The LINC complex also involves nucleoskeletal proteins CRWN/LINC and possibly KAKU4 and the cytoskeletal myosin KAKU1. Interacts with WIT2. In terms of tissue distribution, expressed in seedlings, roots, stems, leaves, and flowers.

It localises to the nucleus envelope. Its subcellular location is the nucleus membrane. In terms of biological role, mediates and enhances the nuclear envelope docking of RANGAP proteins mediated by WIT1 and WIT2 in the undifferentiated cells of root tips. As component of the SUN-WIP-WIT2-KAKU1 complex, mediates the transfer of cytoplasmic forces to the nuclear envelope (NE), leading to nuclear shape changes. The polypeptide is WPP domain-interacting protein 3 (WIP3) (Arabidopsis thaliana (Mouse-ear cress)).